We begin with the raw amino-acid sequence, 1282 residues long: Cytokine receptor (1282 aa).

Residues 1–23 form the signal peptide; it reads MVAQEQLVLLLMLLAGCRGGANA. Residues 24-889 lie on the Extracellular side of the membrane; it reads ILDPGWVIPS…CTPDTHSVKA (866 aa). N-linked (GlcNAc...) asparagine glycosylation is found at Asn44, Asn86, Asn87, and Asn114. An intrachain disulfide couples Cys47 to Cys106. 7 Fibronectin type-III domains span residues 124–220, 227–327, 329–431, 436–535, 537–631, 635–735, and 736–836; these read PLLV…NHFE, PGQN…TAPA, PRRP…SNRD, EPRN…KKDD, AKME…TGEA, QPRE…TAIG, and VPSP…LMST. A disulfide bond links Cys132 and Cys142. N-linked (GlcNAc...) asparagine glycans are attached at residues Asn143 and Asn156. A disulfide bond links Cys173 and Cys183. N-linked (GlcNAc...) asparagine glycans are attached at residues Asn184, Asn230, Asn235, Asn278, Asn298, Asn310, Asn376, Asn448, and Asn466. Cys472 and Cys482 are oxidised to a cystine. 8 N-linked (GlcNAc...) asparagine glycosylation sites follow: Asn568, Asn581, Asn626, Asn676, Asn703, Asn777, Asn790, and Asn862. The chain crosses the membrane as a helical span at residues 890-910; the sequence is MYQTIEVTVAILVLGVIFYLV. Residues 911–1282 lie on the Cytoplasmic side of the membrane; sequence YKKYRKMSDI…NAMAHNRHVL (372 aa). Ser976 is modified (phosphoserine). 2 disordered regions span residues 989–1092 and 1238–1258; these read TASS…HTFS and TVGSPTHAAGGAPGGGNQHSR. 2 stretches are compositionally biased toward basic and acidic residues: residues 999-1009 and 1033-1064; these read VDRDGYDDNHE and NDRERERERDREQEREREQQQQQRESEMDREQ.

It belongs to the type I cytokine receptor family. Interacts with wdp; the interaction promotes internalization of dome and its subsequent lysosomal degradation; thereby reducing JAK/STAT signaling. Post-translationally, undergoes lysosomal degradation. In stage 11 embryos, tracheal pits show highest expression, at stage 14 high expression is detected in the posterior spiracles, gut and head.

The protein resides in the apicolateral cell membrane. Its function is as follows. Critical for epithelial morphogenesis during oogenesis; border cell migration. Required in the germarium for the polarization of follicle cells during encapsulation of germline cells. Required for embryonic segmentation and trachea specification. Essential receptor molecule for upd and JAK/STAT signaling during oogenesis. In Drosophila melanogaster (Fruit fly), this protein is Cytokine receptor (dome).